The primary structure comprises 873 residues: Alanine--tRNA ligase (873 aa).

Zn(2+) contacts are provided by His562, His566, Cys664, and His668.

The protein belongs to the class-II aminoacyl-tRNA synthetase family. Zn(2+) serves as cofactor.

It is found in the cytoplasm. It catalyses the reaction tRNA(Ala) + L-alanine + ATP = L-alanyl-tRNA(Ala) + AMP + diphosphate. In terms of biological role, catalyzes the attachment of alanine to tRNA(Ala) in a two-step reaction: alanine is first activated by ATP to form Ala-AMP and then transferred to the acceptor end of tRNA(Ala). Also edits incorrectly charged Ser-tRNA(Ala) and Gly-tRNA(Ala) via its editing domain. In Shewanella amazonensis (strain ATCC BAA-1098 / SB2B), this protein is Alanine--tRNA ligase.